A 273-amino-acid polypeptide reads, in one-letter code: Large ribosomal subunit protein uL2 (273 aa).

Residues 221–262 (RGTAMNPVDHPHGGGEGRNFGKHPVTPWGVQTKGKKTRHNKR) form a disordered region. A compositionally biased stretch (basic residues) spans 253 to 262 (KGKKTRHNKR).

It belongs to the universal ribosomal protein uL2 family. In terms of assembly, part of the 50S ribosomal subunit. Forms a bridge to the 30S subunit in the 70S ribosome.

In terms of biological role, one of the primary rRNA binding proteins. Required for association of the 30S and 50S subunits to form the 70S ribosome, for tRNA binding and peptide bond formation. It has been suggested to have peptidyltransferase activity; this is somewhat controversial. Makes several contacts with the 16S rRNA in the 70S ribosome. This chain is Large ribosomal subunit protein uL2, found in Haemophilus influenzae (strain ATCC 51907 / DSM 11121 / KW20 / Rd).